Reading from the N-terminus, the 328-residue chain is MMSGEPLHVKTPIRDSMALSKMAGTSVYLKMDSAQPSGSFKIRGIGHFCKRWAKQGCAHFVCSSAGNAGMAAAYAARQLGVPATIVVPSTTPALTIERLKNEGATVKVVGELLDEAFELAKALAKNNPGWVYIPPFDDPLIWEGHASIVKELKETLWEKPGAIALSVGGGGLLCGVVQGLQEVGWGDVPVIAMETFGAHSFHAATTAGKLVSLPKITSVAKALGVKTVGAQALKLFQEHPIFSEVISDQEAVAAIEKFVDDEKILVEPACGAALAAVYSHVIQKLQLEGNLRTPLPSLVVIVCGGSNISLAQLRALKEQLGMTNRLPK.

The residue at position 41 (K41) is an N6-(pyridoxal phosphate)lysine. P128 provides a ligand contact to pyridoxal 5'-phosphate.

Belongs to the serine/threonine dehydratase family. As to quaternary structure, homodimer. Pyridoxal 5'-phosphate serves as cofactor. Predominantly expressed in the perivenous regions of the liver.

It localises to the cytoplasm. It catalyses the reaction L-serine = pyruvate + NH4(+). The catalysed reaction is L-threonine = 2-oxobutanoate + NH4(+). Its pathway is carbohydrate biosynthesis; gluconeogenesis. Functionally, catalyzes the pyridoxal-phosphate-dependent dehydrative deamination of L-threonine and L-serine to ammonia and alpha-ketobutyrate and pyruvate, respectively. This Homo sapiens (Human) protein is L-serine dehydratase/L-threonine deaminase (SDS).